Reading from the N-terminus, the 41-residue chain is U3-theraphotoxin-Hs1a (41 aa).

3 disulfide bridges follow: C2/C16, C9/C37, and C17/C40.

This sequence belongs to the neurotoxin 14 (magi-1) family. 01 (HNTX-16) subfamily. In terms of tissue distribution, expressed by the venom gland.

It localises to the secreted. In terms of biological role, intracerebroventricular injection paralyzes mice. Has no effect on voltage-gated sodium currents. This chain is U3-theraphotoxin-Hs1a, found in Cyriopagopus schmidti (Chinese bird spider).